Here is a 1135-residue protein sequence, read N- to C-terminus: Ubiquitin carboxyl-terminal hydrolase 7 (1135 aa).

In terms of domain architecture, MATH spans 31-172; that stretch reads EGHLSLDIDC…NDTIKLRCRF (142 aa). Residues 193-503 form the USP domain; that stretch reads IGLRNQGATC…SAYMLVYVRD (311 aa). Cys-202 functions as the Nucleophile in the catalytic mechanism. The Proton acceptor role is filled by His-442.

It belongs to the peptidase C19 family.

The protein localises to the nucleus. It catalyses the reaction Thiol-dependent hydrolysis of ester, thioester, amide, peptide and isopeptide bonds formed by the C-terminal Gly of ubiquitin (a 76-residue protein attached to proteins as an intracellular targeting signal).. In terms of biological role, hydrolase that deubiquitinates target proteins. May play a role in regulating the levels of endogenous siRNA biogenesis. This Caenorhabditis elegans protein is Ubiquitin carboxyl-terminal hydrolase 7.